We begin with the raw amino-acid sequence, 1405 residues long: DNA-directed RNA polymerase subunit beta' (1405 aa).

Residues Cys70, Cys72, Cys85, and Cys88 each contribute to the Zn(2+) site. 3 residues coordinate Mg(2+): Asp460, Asp462, and Asp464. Zn(2+) is bound by residues Cys814, Cys888, Cys895, and Cys898.

It belongs to the RNA polymerase beta' chain family. As to quaternary structure, the RNAP catalytic core consists of 2 alpha, 1 beta, 1 beta' and 1 omega subunit. When a sigma factor is associated with the core the holoenzyme is formed, which can initiate transcription. The cofactor is Mg(2+). Zn(2+) is required as a cofactor.

The catalysed reaction is RNA(n) + a ribonucleoside 5'-triphosphate = RNA(n+1) + diphosphate. Its function is as follows. DNA-dependent RNA polymerase catalyzes the transcription of DNA into RNA using the four ribonucleoside triphosphates as substrates. The sequence is that of DNA-directed RNA polymerase subunit beta' from Shewanella sp. (strain ANA-3).